Here is a 183-residue protein sequence, read N- to C-terminus: Holliday junction branch migration complex subunit RuvA (183 aa).

Residues 1–64 (MVVGIEGIIT…EDSNKFYGFL (64 aa)) form a domain I region. A domain II region spans residues 65–139 (DKDEQKMFEM…DTRTKLENVS (75 aa)). Position 139 (serine 139) is a region of interest, flexible linker. Residues 139–183 (SDDKSEALAALLTLGFKQEKIISVLASAQATGTSELIKEALKKLR) are domain III.

It belongs to the RuvA family. Homotetramer. Forms an RuvA(8)-RuvB(12)-Holliday junction (HJ) complex. HJ DNA is sandwiched between 2 RuvA tetramers; dsDNA enters through RuvA and exits via RuvB. An RuvB hexamer assembles on each DNA strand where it exits the tetramer. Each RuvB hexamer is contacted by two RuvA subunits (via domain III) on 2 adjacent RuvB subunits; this complex drives branch migration. In the full resolvosome a probable DNA-RuvA(4)-RuvB(12)-RuvC(2) complex forms which resolves the HJ.

It is found in the cytoplasm. Functionally, the RuvA-RuvB-RuvC complex processes Holliday junction (HJ) DNA during genetic recombination and DNA repair, while the RuvA-RuvB complex plays an important role in the rescue of blocked DNA replication forks via replication fork reversal (RFR). RuvA specifically binds to HJ cruciform DNA, conferring on it an open structure. The RuvB hexamer acts as an ATP-dependent pump, pulling dsDNA into and through the RuvAB complex. HJ branch migration allows RuvC to scan DNA until it finds its consensus sequence, where it cleaves and resolves the cruciform DNA. The sequence is that of Holliday junction branch migration complex subunit RuvA from Campylobacter jejuni subsp. doylei (strain ATCC BAA-1458 / RM4099 / 269.97).